The chain runs to 668 residues: Threonine--tRNA ligase (668 aa).

A TGS domain is found at 1–64 (MSQAISLTFP…TDGKIEIITR (64 aa)). A catalytic region spans residues 245–553 (DHRKLGREMD…LIENFAGHMP (309 aa)). Positions 347, 398, and 530 each coordinate Zn(2+).

This sequence belongs to the class-II aminoacyl-tRNA synthetase family. As to quaternary structure, homodimer. The cofactor is Zn(2+).

The protein resides in the cytoplasm. The catalysed reaction is tRNA(Thr) + L-threonine + ATP = L-threonyl-tRNA(Thr) + AMP + diphosphate + H(+). In terms of biological role, catalyzes the attachment of threonine to tRNA(Thr) in a two-step reaction: L-threonine is first activated by ATP to form Thr-AMP and then transferred to the acceptor end of tRNA(Thr). Also edits incorrectly charged L-seryl-tRNA(Thr). This is Threonine--tRNA ligase from Rhizobium etli (strain CIAT 652).